The chain runs to 379 residues: Anomalous homeobox protein (379 aa).

A DNA-binding region (homeobox) is located at residues 135–196 (PEGLKSRNFP…NYRRRQRALP (62 aa)). The disordered stretch occupies residues 195–283 (LPQHMKPAQQ…SKPLDVSGHP (89 aa)). A compositionally biased stretch (basic and acidic residues) spans 237-246 (QWSEEREEKG).

The protein resides in the nucleus. This is Anomalous homeobox protein (ANHX) from Homo sapiens (Human).